The following is a 316-amino-acid chain: Ribosomal RNA small subunit methyltransferase H (316 aa).

S-adenosyl-L-methionine-binding positions include 35–37 (AGH), Asp55, Phe84, Asp105, and Gln112.

This sequence belongs to the methyltransferase superfamily. RsmH family.

The protein localises to the cytoplasm. It carries out the reaction cytidine(1402) in 16S rRNA + S-adenosyl-L-methionine = N(4)-methylcytidine(1402) in 16S rRNA + S-adenosyl-L-homocysteine + H(+). Specifically methylates the N4 position of cytidine in position 1402 (C1402) of 16S rRNA. This Streptococcus thermophilus (strain CNRZ 1066) protein is Ribosomal RNA small subunit methyltransferase H.